We begin with the raw amino-acid sequence, 308 residues long: GTP-binding protein gtr1 (308 aa).

Residues Ser-11, Gly-14, Lys-15, Ser-16, Ser-17, Thr-31, Thr-37, Gly-60, His-122, Asp-125, and Ile-159 each coordinate GTP.

Belongs to the GTR/RAG GTP-binding protein family. Component of the GSE complex.

It is found in the vacuole membrane. It localises to the cytoplasm. The protein resides in the nucleus. It catalyses the reaction GTP + H2O = GDP + phosphate + H(+). GTPase involved in activation of the TORC1 signaling pathway, which promotes growth and represses autophagy in nutrient-rich conditions. Also required for TORC1 inactivation during nitrogen starvation. This Schizosaccharomyces pombe (strain 972 / ATCC 24843) (Fission yeast) protein is GTP-binding protein gtr1 (gtr1).